A 165-amino-acid polypeptide reads, in one-letter code: Cytochrome c-type biogenesis protein CcmE (165 aa).

Over 1-29 (MSATAEQNARNPKGKGGFARTVSQRKRKR) the chain is Cytoplasmic. The chain crosses the membrane as a helical; Signal-anchor for type II membrane protein span at residues 30–50 (LFLIGGALAVLAVAVGLMLTA). Over 51–165 (FNQDIRFFRT…LKKKGVWEGK (115 aa)) the chain is Periplasmic. Residues His-143 and Tyr-147 each contribute to the heme site.

The protein belongs to the CcmE/CycJ family.

It is found in the cell inner membrane. Its function is as follows. Heme chaperone required for the biogenesis of c-type cytochromes. Transiently binds heme delivered by CcmC and transfers the heme to apo-cytochromes in a process facilitated by CcmF and CcmH. This is Cytochrome c-type biogenesis protein CcmE from Brucella canis (strain ATCC 23365 / NCTC 10854 / RM-666).